The primary structure comprises 164 residues: Nucleotide-binding protein Mfla_1706 (164 aa).

The protein belongs to the YajQ family.

Its function is as follows. Nucleotide-binding protein. The sequence is that of Nucleotide-binding protein Mfla_1706 from Methylobacillus flagellatus (strain ATCC 51484 / DSM 6875 / VKM B-1610 / KT).